Consider the following 159-residue polypeptide: Ribosomal RNA large subunit methyltransferase H (159 aa).

Residues leucine 76, glycine 108, and 127 to 132 (FSPMTF) contribute to the S-adenosyl-L-methionine site.

This sequence belongs to the RNA methyltransferase RlmH family. Homodimer.

It is found in the cytoplasm. The catalysed reaction is pseudouridine(1915) in 23S rRNA + S-adenosyl-L-methionine = N(3)-methylpseudouridine(1915) in 23S rRNA + S-adenosyl-L-homocysteine + H(+). Specifically methylates the pseudouridine at position 1915 (m3Psi1915) in 23S rRNA. This Alkaliphilus oremlandii (strain OhILAs) (Clostridium oremlandii (strain OhILAs)) protein is Ribosomal RNA large subunit methyltransferase H.